The primary structure comprises 117 residues: MDMRVPAQLLGLLLLWLPGARCDIQLTQSPSFLSASVGDRVTITCRASQGISSYLAWYQQKPGKAPKLLIYAASTLQSGVPSRFSGSGSGTEFTLTISSLQPEDFATYYCQQLNSYP.

The signal sequence occupies residues Met1–Cys22. The framework-1 stretch occupies residues Asp23–Cys45. The 94-residue stretch at Ile24–Pro117 folds into the Ig-like domain. Residues Cys45 and Cys110 are joined by a disulfide bond. Positions Arg46 to Ala56 are complementarity-determining-1. The interval Trp57–Tyr71 is framework-2. Positions Ala72–Ser78 are complementarity-determining-2. The tract at residues Gly79–Cys110 is framework-3. Residues Gln111 to Pro117 form a complementarity-determining-3 region.

In terms of assembly, immunoglobulins are composed of two identical heavy chains and two identical light chains; disulfide-linked.

Its subcellular location is the secreted. It localises to the cell membrane. Its function is as follows. V region of the variable domain of immunoglobulin light chains that participates in the antigen recognition. Immunoglobulins, also known as antibodies, are membrane-bound or secreted glycoproteins produced by B lymphocytes. In the recognition phase of humoral immunity, the membrane-bound immunoglobulins serve as receptors which, upon binding of a specific antigen, trigger the clonal expansion and differentiation of B lymphocytes into immunoglobulins-secreting plasma cells. Secreted immunoglobulins mediate the effector phase of humoral immunity, which results in the elimination of bound antigens. The antigen binding site is formed by the variable domain of one heavy chain, together with that of its associated light chain. Thus, each immunoglobulin has two antigen binding sites with remarkable affinity for a particular antigen. The variable domains are assembled by a process called V-(D)-J rearrangement and can then be subjected to somatic hypermutations which, after exposure to antigen and selection, allow affinity maturation for a particular antigen. In Homo sapiens (Human), this protein is Immunoglobulin kappa variable 1-9.